The primary structure comprises 395 residues: L-methionine gamma-lyase (395 aa).

Residues Tyr56 to Arg58 and Gly86 to Met87 contribute to the pyridoxal 5'-phosphate site. Tyr111 lines the substrate pocket. A pyridoxal 5'-phosphate-binding site is contributed by Ser206–Thr208. Position 209 is an N6-(pyridoxal phosphate)lysine (Lys209). Residue Arg373 participates in substrate binding.

The protein belongs to the trans-sulfuration enzymes family. L-methionine gamma-lyase subfamily. In terms of assembly, homotetramer. Pyridoxal 5'-phosphate serves as cofactor.

It catalyses the reaction L-methionine + H2O = methanethiol + 2-oxobutanoate + NH4(+). The enzyme catalyses L-homocysteine + H2O = 2-oxobutanoate + hydrogen sulfide + NH4(+) + H(+). Functionally, catalyzes the alpha,gamma-elimination of L-methionine to produce methanethiol, 2-oxobutanoate and ammonia; methanethiol (methyl mercaptan) is considered to be one of the main causes of the oral malodor associated with periodontitis. Also displays homocysteine desulfhydrase activity, degrading homocysteine to produce hydrogen sulfide, 2-oxobutanoate and ammonia. L-cysteine and S-methyl-L-cysteine are poor substrates for the enzyme. Plays an important role in the resistance of F.nucleatum to the antibacterial agent 3-chloro-DL-alanine (3CA), thanks to its 3CA chloride-lyase (deaminating) activity. The polypeptide is L-methionine gamma-lyase (Fusobacterium nucleatum subsp. polymorphum (Fusobacterium polymorphum)).